Here is a 103-residue protein sequence, read N- to C-terminus: Large ribosomal subunit protein bL21 (103 aa).

The protein belongs to the bacterial ribosomal protein bL21 family. In terms of assembly, part of the 50S ribosomal subunit. Contacts protein L20.

This protein binds to 23S rRNA in the presence of protein L20. This chain is Large ribosomal subunit protein bL21, found in Ralstonia pickettii (strain 12J).